Consider the following 863-residue polypeptide: Phycobiliprotein ApcE (863 aa).

(2R,3E)-phycocyanobilin is bound at residue Cys-178. PBS-linker domains follow at residues 235–414 (DLQG…RFQK), 473–652 (PIEN…KLQP), and 671–852 (NNII…FILM).

The protein belongs to the phycobilisome linker protein family. Post-translationally, contains one covalently linked bilin chromophore. This protein autochromophorylates (Potential).

It is found in the plastid. It localises to the chloroplast thylakoid membrane. Its function is as follows. This protein is postulated to act both as terminal energy acceptor and as a linker polypeptide that stabilizes the phycobilisome architecture. May have intrinsic bilin lyase activity. The polypeptide is Phycobiliprotein ApcE (apcE) (Galdieria sulphuraria (Red alga)).